Reading from the N-terminus, the 341-residue chain is Ferredoxin--NADP reductase (341 aa).

The FAD site is built by Asp-38, Gln-46, Tyr-51, Val-91, Phe-125, Asp-292, and Thr-333.

This sequence belongs to the ferredoxin--NADP reductase type 2 family. In terms of assembly, homodimer. The cofactor is FAD.

It carries out the reaction 2 reduced [2Fe-2S]-[ferredoxin] + NADP(+) + H(+) = 2 oxidized [2Fe-2S]-[ferredoxin] + NADPH. This Gluconacetobacter diazotrophicus (strain ATCC 49037 / DSM 5601 / CCUG 37298 / CIP 103539 / LMG 7603 / PAl5) protein is Ferredoxin--NADP reductase.